Reading from the N-terminus, the 349-residue chain is DENN domain-containing protein 10 (349 aa).

Positions 1–135 constitute a uDENN domain; the sequence is MATPELMLSL…TKGICQSDEN (135 aa). The 135-residue stretch at 160–294 folds into the cDENN domain; the sequence is QFGMETIILY…ADRSDAQVIK (135 aa). The dDENN domain maps to 296 to 349; sequence ISVKTKEILSNLMSLADHADNSKLTLECLKQGHYPPATENFLFHLAAAEQLLKI.

Belongs to the DENND10 family.

Its subcellular location is the late endosome. Functionally, guanine nucleotide exchange factor (GEF) which may be involved in the regulation of late endocytic pathway homeostasis, including endosomal positioning, maturation and secretion. The sequence is that of DENN domain-containing protein 10 (dennd10) from Danio rerio (Zebrafish).